The primary structure comprises 143 residues: Endoribonuclease YbeY (143 aa).

Residues H109, H113, and H119 each coordinate Zn(2+).

Belongs to the endoribonuclease YbeY family. The cofactor is Zn(2+).

The protein resides in the cytoplasm. In terms of biological role, single strand-specific metallo-endoribonuclease involved in late-stage 70S ribosome quality control and in maturation of the 3' terminus of the 16S rRNA. The chain is Endoribonuclease YbeY from Carboxydothermus hydrogenoformans (strain ATCC BAA-161 / DSM 6008 / Z-2901).